The chain runs to 403 residues: Phosphopentomutase (403 aa).

D13, D298, H303, D339, H340, and H351 together coordinate Mn(2+).

It belongs to the phosphopentomutase family. Mn(2+) is required as a cofactor.

It is found in the cytoplasm. The catalysed reaction is 2-deoxy-alpha-D-ribose 1-phosphate = 2-deoxy-D-ribose 5-phosphate. The enzyme catalyses alpha-D-ribose 1-phosphate = D-ribose 5-phosphate. Its pathway is carbohydrate degradation; 2-deoxy-D-ribose 1-phosphate degradation; D-glyceraldehyde 3-phosphate and acetaldehyde from 2-deoxy-alpha-D-ribose 1-phosphate: step 1/2. Its function is as follows. Isomerase that catalyzes the conversion of deoxy-ribose 1-phosphate (dRib-1-P) and ribose 1-phosphate (Rib-1-P) to deoxy-ribose 5-phosphate (dRib-5-P) and ribose 5-phosphate (Rib-5-P), respectively. This Streptococcus pyogenes serotype M18 (strain MGAS8232) protein is Phosphopentomutase.